Here is a 415-residue protein sequence, read N- to C-terminus: Plasminogen activator inhibitor 2, macrophage (415 aa).

Residues Asn-23, Asn-75, Asn-261, and Asn-339 are each glycosylated (N-linked (GlcNAc...) asparagine).

This sequence belongs to the serpin family. Ov-serpin subfamily. Interacts with PSMB1. In terms of processing, the signal sequence is not cleaved.

Its subcellular location is the cytoplasm. The protein localises to the secreted. It is found in the extracellular space. Its function is as follows. Inhibits urokinase-type plasminogen activator. The monocyte derived PAI-2 is distinct from the endothelial cell-derived PAI-1. Not required for normal murine development or survival. This Mus musculus (Mouse) protein is Plasminogen activator inhibitor 2, macrophage (Serpinb2).